A 795-amino-acid chain; its full sequence is Mitochondrial inner membrane m-AAA protease component paraplegin (795 aa).

A mitochondrion-targeting transit peptide spans M1–Y43. A propeptide spans M44 to R105 (removed in mature form). Topologically, residues L106–T144 are mitochondrial matrix. Residues Q108–R133 are disordered. Residues K109 to R133 show a composition bias toward basic and acidic residues. The helical transmembrane segment at L145–I165 threads the bilayer. The Mitochondrial intermembrane portion of the chain corresponds to S166–T248. A helical transmembrane segment spans residues G249–W269. Residues Y270–K795 lie on the Mitochondrial matrix side of the membrane. Positions 312, 352, 353, 354, 355, 356, and 357 each coordinate ATP. Y505 is subject to 3'-nitrotyrosine. Residue H574 participates in Zn(2+) binding. E575 is a catalytic residue. H578 and D650 together coordinate Zn(2+). An interaction with PPIF region spans residues H701–K795. The interval P751–K795 is disordered.

The protein in the N-terminal section; belongs to the AAA ATPase family. In the C-terminal section; belongs to the peptidase M41 family. Forms heterooligomers with AFG3L2; the m-AAA protease is composed of heterohexamers of AFG3L2 and SPG7. Component of the mitochondrial permeability transition pore complex (mPTPC), at least composed of SPG7, VDAC1 and PPIF. Interacts with MAIP1. The cofactor is Zn(2+). In terms of processing, upon import into the mitochondrion, the N-terminal transit peptide is cleaved by the mitochondrial-processing peptidase (MPP) to generate an intermediate form which undergoes a second proteolytic cleavage mediated by proteases AFG3L2 removing an additional N-terminal fragment to generate the proteolytically active mature form. Ubiquitous.

It localises to the mitochondrion inner membrane. It carries out the reaction ATP + H2O = ADP + phosphate + H(+). Catalytic component of the m-AAA protease, a protease that plays a key role in proteostasis of inner mitochondrial membrane proteins, and which is essential for axonal and neuron development. SPG7 possesses both ATPase and protease activities: the ATPase activity is required to unfold substrates, threading them into the internal proteolytic cavity for hydrolysis into small peptide fragments. The m-AAA protease exerts a dual role in the mitochondrial inner membrane: it mediates the processing of specific regulatory proteins and ensures protein quality control by degrading misfolded polypeptides. Mediates protein maturation of the mitochondrial ribosomal subunit MRPL32/bL32m by catalyzing the cleavage of the presequence of MRPL32/bL32m prior to assembly into the mitochondrial ribosome. Acts as a regulator of calcium in neurons by mediating degradation of SMDT1/EMRE before its assembly with the uniporter complex, limiting the availability of SMDT1/EMRE for MCU assembly and promoting efficient assembly of gatekeeper subunits with MCU. Also regulates mitochondrial calcium by catalyzing degradation of MCU. Plays a role in the formation and regulation of the mitochondrial permeability transition pore (mPTP) and its proteolytic activity is dispensable for this function. The protein is Mitochondrial inner membrane m-AAA protease component paraplegin of Homo sapiens (Human).